The primary structure comprises 62 residues: Large ribosomal subunit protein eL24 (62 aa).

4 residues coordinate Zn(2+): Cys-6, Cys-9, Cys-32, and Cys-36. The C4-type zinc-finger motif lies at 6–36 (CYFCGQMLEPGTGKLYIKKDGSTYFMCSSKC).

It belongs to the eukaryotic ribosomal protein eL24 family. Part of the 50S ribosomal subunit. Forms a cluster with proteins L3 and L14. Zn(2+) is required as a cofactor.

Binds to the 23S rRNA. This chain is Large ribosomal subunit protein eL24, found in Methanosarcina mazei (strain ATCC BAA-159 / DSM 3647 / Goe1 / Go1 / JCM 11833 / OCM 88) (Methanosarcina frisia).